A 464-amino-acid polypeptide reads, in one-letter code: uncharacterized protein (464 aa).

Helical transmembrane passes span 7–27, 37–57, 94–114, 121–141, 153–173, 196–216, 231–251, 282–302, 329–349, 359–379, 401–421, and 432–452; these read VLNV…LRTL, LVFY…LVAA, VVWY…LIAP, FYLL…NCFG, ASIG…VWIF, LSLF…AVHA, FYSA…IVIV, VIAV…IIGP, VAIL…FILL, LSDL…AAAI, MSLI…VGFI, and FLFE…PWLF.

This sequence belongs to the amino acid-polyamine-organocation (APC) superfamily.

It is found in the cell membrane. This is an uncharacterized protein from Legionella pneumophila subsp. pneumophila (strain Philadelphia 1 / ATCC 33152 / DSM 7513).